We begin with the raw amino-acid sequence, 146 residues long: Large ribosomal subunit protein uL15 (146 aa).

A disordered region spans residues 1–46 (MAIELHDLKPAPGAHKAKTRVGRGEGSKGKTAGRGTKGTGARKNVP). The segment covering 29-43 (GKTAGRGTKGTGARK) has biased composition (low complexity).

The protein belongs to the universal ribosomal protein uL15 family. As to quaternary structure, part of the 50S ribosomal subunit.

Binds to the 23S rRNA. The polypeptide is Large ribosomal subunit protein uL15 (Cutibacterium acnes (strain DSM 16379 / KPA171202) (Propionibacterium acnes)).